The chain runs to 83 residues: Mu-theraphotoxin-Hhn2b 2 (83 aa).

Residues 1-21 (MKASMFLALAGLVLLFVVCYA) form the signal peptide. A propeptide spanning residues 22–48 (SESEEKEFPRELISKIFTVDDFKGEER) is cleaved from the precursor. Intrachain disulfides connect Cys50–Cys65, Cys57–Cys70, and Cys64–Cys77. A Leucine amide modification is found at Leu81.

Belongs to the neurotoxin 10 (Hwtx-1) family. 14 (Hntx-1) subfamily. Monomer. In terms of tissue distribution, expressed by the venom gland.

Its subcellular location is the secreted. In terms of biological role, weakly blocks the rat SCN2A/SCN1B (Nav1.2/beta-1) sodium channel (IC(50)=68 uM) and the insect sodium channel para/tipE (IC(50)=4.3 uM), without altering the activation or inactivation kinetics (depressant toxin). The sequence is that of Mu-theraphotoxin-Hhn2b 2 from Cyriopagopus hainanus (Chinese bird spider).